The sequence spans 185 residues: Acireductone dioxygenase (185 aa).

Residues His-96, His-98, Glu-102, and His-140 each coordinate Fe(2+). Residues His-96, His-98, Glu-102, and His-140 each coordinate Ni(2+).

The protein belongs to the acireductone dioxygenase (ARD) family. As to quaternary structure, monomer. Fe(2+) serves as cofactor. It depends on Ni(2+) as a cofactor.

The enzyme catalyses 1,2-dihydroxy-5-(methylsulfanyl)pent-1-en-3-one + O2 = 3-(methylsulfanyl)propanoate + CO + formate + 2 H(+). It carries out the reaction 1,2-dihydroxy-5-(methylsulfanyl)pent-1-en-3-one + O2 = 4-methylsulfanyl-2-oxobutanoate + formate + 2 H(+). It participates in amino-acid biosynthesis; L-methionine biosynthesis via salvage pathway; L-methionine from S-methyl-5-thio-alpha-D-ribose 1-phosphate: step 5/6. Its function is as follows. Catalyzes 2 different reactions between oxygen and the acireductone 1,2-dihydroxy-3-keto-5-methylthiopentene (DHK-MTPene) depending upon the metal bound in the active site. Fe-containing acireductone dioxygenase (Fe-ARD) produces formate and 2-keto-4-methylthiobutyrate (KMTB), the alpha-ketoacid precursor of methionine in the methionine recycle pathway. Ni-containing acireductone dioxygenase (Ni-ARD) produces methylthiopropionate, carbon monoxide and formate, and does not lie on the methionine recycle pathway. This Marinobacter nauticus (strain ATCC 700491 / DSM 11845 / VT8) (Marinobacter aquaeolei) protein is Acireductone dioxygenase.